The chain runs to 669 residues: DNA ligase 2 (669 aa).

NAD(+) contacts are provided by residues 35–39 and 83–84; these read DKEYD and SL. Catalysis depends on Lys-125, which acts as the N6-AMP-lysine intermediate. Residues Arg-147, Glu-181, and Lys-317 each coordinate NAD(+). Cys-410, Cys-413, Cys-426, and Cys-432 together coordinate Zn(2+). One can recognise a BRCT domain in the interval 590-669; it reads VVENAFTGKT…EEFEQLINNM (80 aa).

Belongs to the NAD-dependent DNA ligase family. LigA subfamily. The cofactor is Mg(2+). It depends on Mn(2+) as a cofactor.

The catalysed reaction is NAD(+) + (deoxyribonucleotide)n-3'-hydroxyl + 5'-phospho-(deoxyribonucleotide)m = (deoxyribonucleotide)n+m + AMP + beta-nicotinamide D-nucleotide.. Its function is as follows. DNA ligase that catalyzes the formation of phosphodiester linkages between 5'-phosphoryl and 3'-hydroxyl groups in double-stranded DNA using NAD as a coenzyme and as the energy source for the reaction. It is essential for DNA replication and repair of damaged DNA. The protein is DNA ligase 2 of Clostridium acetobutylicum (strain ATCC 824 / DSM 792 / JCM 1419 / IAM 19013 / LMG 5710 / NBRC 13948 / NRRL B-527 / VKM B-1787 / 2291 / W).